The primary structure comprises 83 residues: Cytochrome b559 subunit alpha (83 aa).

The chain crosses the membrane as a helical span at residues 21–35 (IIHTITVPMLFLAGW). Residue His-23 participates in heme binding.

This sequence belongs to the PsbE/PsbF family. As to quaternary structure, heterodimer of an alpha subunit and a beta subunit. PSII is composed of 1 copy each of membrane proteins PsbA, PsbB, PsbC, PsbD, PsbE, PsbF, PsbH, PsbI, PsbJ, PsbK, PsbL, PsbM, PsbT, PsbX, PsbY, PsbZ, Psb30/Ycf12, peripheral proteins PsbO, CyanoQ (PsbQ), PsbU, PsbV and a large number of cofactors. It forms dimeric complexes. Heme b is required as a cofactor.

Its subcellular location is the cellular thylakoid membrane. Functionally, this b-type cytochrome is tightly associated with the reaction center of photosystem II (PSII). PSII is a light-driven water:plastoquinone oxidoreductase that uses light energy to abstract electrons from H(2)O, generating O(2) and a proton gradient subsequently used for ATP formation. It consists of a core antenna complex that captures photons, and an electron transfer chain that converts photonic excitation into a charge separation. In Acaryochloris marina (strain MBIC 11017), this protein is Cytochrome b559 subunit alpha.